The chain runs to 2617 residues: DNA-directed RNA polymerase subunit beta'' (2617 aa).

Zn(2+) contacts are provided by Cys-263, Cys-334, Cys-341, and Cys-344.

It belongs to the RNA polymerase beta' chain family. RpoC2 subfamily. As to quaternary structure, in plastids the minimal PEP RNA polymerase catalytic core is composed of four subunits: alpha, beta, beta', and beta''. When a (nuclear-encoded) sigma factor is associated with the core the holoenzyme is formed, which can initiate transcription. The cofactor is Zn(2+).

The protein localises to the plastid. Its subcellular location is the chloroplast. The catalysed reaction is RNA(n) + a ribonucleoside 5'-triphosphate = RNA(n+1) + diphosphate. Its function is as follows. DNA-dependent RNA polymerase catalyzes the transcription of DNA into RNA using the four ribonucleoside triphosphates as substrates. This Oedogonium cardiacum (Filamentous green alga) protein is DNA-directed RNA polymerase subunit beta''.